The chain runs to 1042 residues: Isoleucine--tRNA ligase (1042 aa).

The 'HIGH' region signature appears at 59 to 69 (PFANGLPHYGH). Positions 619–623 (KMSKS) match the 'KMSKS' region motif. Lysine 622 serves as a coordination point for ATP.

Belongs to the class-I aminoacyl-tRNA synthetase family. IleS type 2 subfamily. As to quaternary structure, monomer. Zn(2+) is required as a cofactor.

It is found in the cytoplasm. It carries out the reaction tRNA(Ile) + L-isoleucine + ATP = L-isoleucyl-tRNA(Ile) + AMP + diphosphate. Functionally, catalyzes the attachment of isoleucine to tRNA(Ile). As IleRS can inadvertently accommodate and process structurally similar amino acids such as valine, to avoid such errors it has two additional distinct tRNA(Ile)-dependent editing activities. One activity is designated as 'pretransfer' editing and involves the hydrolysis of activated Val-AMP. The other activity is designated 'posttransfer' editing and involves deacylation of mischarged Val-tRNA(Ile). The sequence is that of Isoleucine--tRNA ligase from Nocardia farcinica (strain IFM 10152).